Consider the following 100-residue polypeptide: Small ribosomal subunit protein bS20 (100 aa).

Basic and acidic residues predominate over residues 1 to 18 (MPNKKSAEKRVRQSEQRR). The interval 1-26 (MPNKKSAEKRVRQSEQRRQKNRGYQK) is disordered.

Belongs to the bacterial ribosomal protein bS20 family.

Binds directly to 16S ribosomal RNA. The sequence is that of Small ribosomal subunit protein bS20 from Petrotoga mobilis (strain DSM 10674 / SJ95).